Consider the following 206-residue polypeptide: RNA-binding protein (206 aa).

The tract at residues 87–206 (PRGMQRGNRR…SGAKSKRRPR (120 aa)) is disordered. The span at 109 to 132 (MPKDDSNDRKKAKTSKDRKVEKSS) shows a compositional bias: basic and acidic residues.

Belongs to the phytoreovirus RNA-binding protein family.

It is found in the host cytoplasm. In terms of biological role, constituent of viral factories. Binds to ssRNA and dsRNA. The polypeptide is RNA-binding protein (Rice gall dwarf virus (RGDV)).